We begin with the raw amino-acid sequence, 427 residues long: Serine hydroxymethyltransferase (427 aa).

(6S)-5,6,7,8-tetrahydrofolate-binding positions include leucine 118 and 122–124 (GHL). Lysine 227 is subject to N6-(pyridoxal phosphate)lysine. Residues glutamate 243 and 351-353 (SPF) each bind (6S)-5,6,7,8-tetrahydrofolate.

This sequence belongs to the SHMT family. As to quaternary structure, homodimer. The cofactor is pyridoxal 5'-phosphate.

It localises to the cytoplasm. It carries out the reaction (6R)-5,10-methylene-5,6,7,8-tetrahydrofolate + glycine + H2O = (6S)-5,6,7,8-tetrahydrofolate + L-serine. Its pathway is one-carbon metabolism; tetrahydrofolate interconversion. It functions in the pathway amino-acid biosynthesis; glycine biosynthesis; glycine from L-serine: step 1/1. In terms of biological role, catalyzes the reversible interconversion of serine and glycine with tetrahydrofolate (THF) serving as the one-carbon carrier. This reaction serves as the major source of one-carbon groups required for the biosynthesis of purines, thymidylate, methionine, and other important biomolecules. Also exhibits THF-independent aldolase activity toward beta-hydroxyamino acids, producing glycine and aldehydes, via a retro-aldol mechanism. The protein is Serine hydroxymethyltransferase of Thermotoga maritima (strain ATCC 43589 / DSM 3109 / JCM 10099 / NBRC 100826 / MSB8).